The following is a 235-amino-acid chain: Regulator of G-protein signaling 18 (235 aa).

Position 49 is a phosphoserine (Ser-49). The region spanning 86–202 is the RGS domain; sequence SFDKLLSHRD…LKSEIYLHLI (117 aa). Ser-216 and Ser-218 each carry phosphoserine.

The protein localises to the cytoplasm. Its function is as follows. Inhibits signal transduction by increasing the GTPase activity of G protein alpha subunits thereby driving them into their inactive GDP-bound form. Binds to G(i) alpha-1, G(i) alpha-2, G(i) alpha-3 and G(q) alpha. This Rattus norvegicus (Rat) protein is Regulator of G-protein signaling 18 (Rgs18).